The following is a 38-amino-acid chain: MTKPNPNKQTVELNRTSLYWGLLLIFVLAILFSSYIFN.

Residues 17–37 (SLYWGLLLIFVLAILFSSYIF) traverse the membrane as a helical segment.

Belongs to the PsbL family. In terms of assembly, PSII is composed of 1 copy each of membrane proteins PsbA, PsbB, PsbC, PsbD, PsbE, PsbF, PsbH, PsbI, PsbJ, PsbK, PsbL, PsbM, PsbT, PsbX, PsbY, PsbZ, Psb30/Ycf12, at least 3 peripheral proteins of the oxygen-evolving complex and a large number of cofactors. It forms dimeric complexes.

Its subcellular location is the plastid. It is found in the chloroplast thylakoid membrane. One of the components of the core complex of photosystem II (PSII). PSII is a light-driven water:plastoquinone oxidoreductase that uses light energy to abstract electrons from H(2)O, generating O(2) and a proton gradient subsequently used for ATP formation. It consists of a core antenna complex that captures photons, and an electron transfer chain that converts photonic excitation into a charge separation. This subunit is found at the monomer-monomer interface and is required for correct PSII assembly and/or dimerization. This chain is Photosystem II reaction center protein L, found in Nephroselmis olivacea (Green alga).